The primary structure comprises 116 residues: Large ribosomal subunit protein bL17 (116 aa).

Belongs to the bacterial ribosomal protein bL17 family. Part of the 50S ribosomal subunit. Contacts protein L32.

This is Large ribosomal subunit protein bL17 from Synechococcus sp. (strain CC9311).